A 645-amino-acid polypeptide reads, in one-letter code: Acetyl-coenzyme A synthetase (645 aa).

Residues 190 to 193 (RGGR) and Thr-308 contribute to the CoA site. ATP-binding positions include 384–386 (GEP), 408–413 (DTWWQT), Asp-497, and Arg-512. Ser-520 is a binding site for CoA. Arg-523 contributes to the ATP binding site. Mg(2+) is bound by residues Val-534, His-536, and Val-539. Lys-606 is modified (N6-acetyllysine).

This sequence belongs to the ATP-dependent AMP-binding enzyme family. Mg(2+) serves as cofactor. Acetylated. Deacetylation by the SIR2-homolog deacetylase activates the enzyme.

It carries out the reaction acetate + ATP + CoA = acetyl-CoA + AMP + diphosphate. Catalyzes the conversion of acetate into acetyl-CoA (AcCoA), an essential intermediate at the junction of anabolic and catabolic pathways. AcsA undergoes a two-step reaction. In the first half reaction, AcsA combines acetate with ATP to form acetyl-adenylate (AcAMP) intermediate. In the second half reaction, it can then transfer the acetyl group from AcAMP to the sulfhydryl group of CoA, forming the product AcCoA. This is Acetyl-coenzyme A synthetase from Saccharophagus degradans (strain 2-40 / ATCC 43961 / DSM 17024).